The sequence spans 331 residues: Probable serine hydrolase (331 aa).

Residues 1-28 (MGQTRVAATTAAQSPAAELSPETNGQTE) form a disordered region. The span at 7 to 17 (AATTAAQSPAA) shows a compositional bias: low complexity. In terms of domain architecture, AB hydrolase-1 spans 63 to 163 (PIIALHGWQD…EVEKLINIDI (101 aa)). Ser138 is an active-site residue.

It belongs to the AB hydrolase superfamily. In terms of tissue distribution, ubiquitously expressed before embryonic stage 11. At stage 11, expression is concentrated in the foregut and posterior midgut. By stage 15, in gastric caeca, pharynx, posterior spiracles and anterior edge of midgut. At the end of embryogenesis, expression is confined to gastric caeca. During third instar larvae, expressed at low levels in gastric caeca, midgut and hindgut and high level in fat body.

Functionally, may have a role in detoxification and digestion during embryogenesis and larval development. The protein is Probable serine hydrolase (kraken) of Drosophila melanogaster (Fruit fly).